The primary structure comprises 303 residues: Dihydroorotate dehydrogenase B (NAD(+)), catalytic subunit (303 aa).

Residues Ser21 and 45–46 (KG) contribute to the FMN site. Residues Lys45 and 69–73 (NAVGL) each bind substrate. Residues Asn99 and Asn127 each contribute to the FMN site. Asn127 is a binding site for substrate. The active-site Nucleophile is the Cys130. FMN is bound by residues Lys165 and Ile191. 192–193 (NT) is a binding site for substrate. FMN contacts are provided by residues Gly217, 243–244 (GG), and 265–266 (GT).

This sequence belongs to the dihydroorotate dehydrogenase family. Type 1 subfamily. Heterotetramer of 2 PyrK and 2 PyrD type B subunits. FMN is required as a cofactor.

The protein resides in the cytoplasm. It carries out the reaction (S)-dihydroorotate + NAD(+) = orotate + NADH + H(+). Its pathway is pyrimidine metabolism; UMP biosynthesis via de novo pathway; orotate from (S)-dihydroorotate (NAD(+) route): step 1/1. Functionally, catalyzes the conversion of dihydroorotate to orotate with NAD(+) as electron acceptor. The polypeptide is Dihydroorotate dehydrogenase B (NAD(+)), catalytic subunit (pyrD) (Bacteroides fragilis (strain ATCC 25285 / DSM 2151 / CCUG 4856 / JCM 11019 / LMG 10263 / NCTC 9343 / Onslow / VPI 2553 / EN-2)).